The primary structure comprises 859 residues: Leucine--tRNA ligase (859 aa).

The 'HIGH' region signature appears at P42 to H52. A 'KMSKS' region motif is present at residues K618–S622. K621 serves as a coordination point for ATP.

The protein belongs to the class-I aminoacyl-tRNA synthetase family.

The protein localises to the cytoplasm. The enzyme catalyses tRNA(Leu) + L-leucine + ATP = L-leucyl-tRNA(Leu) + AMP + diphosphate. The protein is Leucine--tRNA ligase of Shewanella baltica (strain OS223).